Consider the following 184-residue polypeptide: Large ribosomal subunit protein uL6 (184 aa).

It belongs to the universal ribosomal protein uL6 family. In terms of assembly, part of the 50S ribosomal subunit.

Functionally, this protein binds to the 23S rRNA, and is important in its secondary structure. It is located near the subunit interface in the base of the L7/L12 stalk, and near the tRNA binding site of the peptidyltransferase center. This Aster yellows witches'-broom phytoplasma (strain AYWB) protein is Large ribosomal subunit protein uL6.